The chain runs to 159 residues: Growth arrest and DNA damage-inducible protein GADD45 gamma (159 aa).

A homodimerization region spans residues valine 43 to cysteine 86.

It belongs to the GADD45 family. Undergoes concentration-dependent homodimerization, which is required for growth inhibititory activity and enhances interaction with PCNA. Interacts with GADD45GIP1. Interacts with PCNA.

Involved in the regulation of growth and apoptosis. Mediates activation of stress-responsive MTK1/MEKK4 MAPKKK. This chain is Growth arrest and DNA damage-inducible protein GADD45 gamma (GADD45G), found in Bos taurus (Bovine).